The sequence spans 206 residues: Peptidyl-tRNA hydrolase (206 aa).

A tRNA-binding site is contributed by Tyr19. His24 acts as the Proton acceptor in catalysis. Tyr70, Asn72, and Asn118 together coordinate tRNA.

Belongs to the PTH family. As to quaternary structure, monomer.

The protein localises to the cytoplasm. It carries out the reaction an N-acyl-L-alpha-aminoacyl-tRNA + H2O = an N-acyl-L-amino acid + a tRNA + H(+). Its function is as follows. Hydrolyzes ribosome-free peptidyl-tRNAs (with 1 or more amino acids incorporated), which drop off the ribosome during protein synthesis, or as a result of ribosome stalling. In terms of biological role, catalyzes the release of premature peptidyl moieties from peptidyl-tRNA molecules trapped in stalled 50S ribosomal subunits, and thus maintains levels of free tRNAs and 50S ribosomes. This Prochlorococcus marinus (strain MIT 9313) protein is Peptidyl-tRNA hydrolase.